Consider the following 199-residue polypeptide: Holliday junction branch migration complex subunit RuvA (199 aa).

The tract at residues 1–64 (MIALLTGKLA…EDAINLYGFR (64 aa)) is domain I. Residues 65 to 143 (TQQEKELFQL…KLGLAQPQAG (79 aa)) are domain II. Residues 144–148 (GATAP) are flexible linker. The interval 149–199 (AKQEIRDDVLSALINLGYKEAVVQKALAELKVTEDATVELVLKQALKILMK) is domain III.

This sequence belongs to the RuvA family. As to quaternary structure, homotetramer. Forms an RuvA(8)-RuvB(12)-Holliday junction (HJ) complex. HJ DNA is sandwiched between 2 RuvA tetramers; dsDNA enters through RuvA and exits via RuvB. An RuvB hexamer assembles on each DNA strand where it exits the tetramer. Each RuvB hexamer is contacted by two RuvA subunits (via domain III) on 2 adjacent RuvB subunits; this complex drives branch migration. In the full resolvosome a probable DNA-RuvA(4)-RuvB(12)-RuvC(2) complex forms which resolves the HJ.

Its subcellular location is the cytoplasm. Functionally, the RuvA-RuvB-RuvC complex processes Holliday junction (HJ) DNA during genetic recombination and DNA repair, while the RuvA-RuvB complex plays an important role in the rescue of blocked DNA replication forks via replication fork reversal (RFR). RuvA specifically binds to HJ cruciform DNA, conferring on it an open structure. The RuvB hexamer acts as an ATP-dependent pump, pulling dsDNA into and through the RuvAB complex. HJ branch migration allows RuvC to scan DNA until it finds its consensus sequence, where it cleaves and resolves the cruciform DNA. This Geobacter sp. (strain M21) protein is Holliday junction branch migration complex subunit RuvA.